We begin with the raw amino-acid sequence, 617 residues long: Sodium-dependent noradrenaline transporter (617 aa).

Positions 1 to 23 are disordered; that stretch reads MLLARMNPQVQPENNGADTGPEQ. Over 1–62 the chain is Cytoplasmic; the sequence is MLLARMNPQV…AQPRETWGKK (62 aa). Over residues 8–17 the composition is skewed to polar residues; the sequence is PQVQPENNGA. The chain crosses the membrane as a helical span at residues 63 to 88; it reads IDFLLSVVGFAVDLANVWRFPYLCYK. Na(+) contacts are provided by glycine 71, alanine 73, and valine 74. Aspartate 75 serves as a coordination point for (R)-noradrenaline. Aspartate 75 is a binding site for dopamine. Asparagine 78 provides a ligand contact to Na(+). Residues tyrosine 87 and lysine 88 each coordinate (R)-noradrenaline. Topologically, residues 89 to 92 are extracellular; sequence NGGG. Residues 93–116 form a helical membrane-spanning segment; that stretch reads AFLIPYTLFLIIAGMPLFYMELAL. The Cytoplasmic portion of the chain corresponds to 117–135; the sequence is GQYNREGAATVWKICPFFK. A helical transmembrane segment spans residues 136 to 166; that stretch reads GVGYAVILIALYVGFYYNVIIAWSLYYLFSS. Residues alanine 145 and glycine 149 each coordinate (R)-noradrenaline. Alanine 145 contacts dopamine. Residues 167-233 lie on the Extracellular side of the membrane; sequence FTLNLPWTDC…SSGIHDIGLP (67 aa). Cysteine 176 and cysteine 185 are oxidised to a cystine. Asparagine 184, asparagine 192, and asparagine 198 each carry an N-linked (GlcNAc...) asparagine glycan. Residues 234 to 254 traverse the membrane as a helical segment; the sequence is QWQLLLCLMVVVIVLYFSLWK. At 255–257 the chain is on the cytoplasmic side; that stretch reads GVK. The chain crosses the membrane as a helical span at residues 258-282; sequence TSGKVVWITATLPYFVLFVLLVHGV. Residues 283-306 lie on the Extracellular side of the membrane; it reads TLPGASNGINAYLHIDFYRLKEAT. The helical transmembrane segment at 307-332 threads the bilayer; it reads VWIDAATQIFFSLGAGFGVLIAFASY. Phenylalanine 317 provides a ligand contact to (R)-noradrenaline. Phenylalanine 317 is a dopamine binding site. Serine 318 contacts Na(+). Topologically, residues 333–338 are cytoplasmic; it reads NKFDNN. Residues 339-362 traverse the membrane as a helical segment; the sequence is CYRDALLTSSINCITSFVSGFAIF. Asparagine 350 serves as a coordination point for Na(+). Residues 363-402 are Extracellular-facing; it reads SILGYMAHEHKVNIEDVATEGAGLVFILYPEAISTLSGST. Glutamate 382 lines the (R)-noradrenaline pocket. Glutamate 382 serves as a coordination point for dopamine. A helical membrane pass occupies residues 403–428; the sequence is FWAVVFFVMLLALGLDSSMGGMEAVI. Na(+) is bound by residues aspartate 418 and serine 419. Topologically, residues 429–443 are cytoplasmic; sequence TGLADDFQVLKRHRK. Residues 444 to 464 traverse the membrane as a helical segment; the sequence is LFTFGVTFSTFLLALFCITKG. Residue glycine 465 is a topological domain, extracellular. The chain crosses the membrane as a helical span at residues 466–492; that stretch reads IYVLTLLDTFAAGTSILFAVLMEAIGV. The Cytoplasmic portion of the chain corresponds to 493–522; that stretch reads SWFYGVDRFSNDIQQMMGFRPGLYWRLCWK. A helical membrane pass occupies residues 523-545; sequence FVSPAFLLFVVVVSIINFKPLTY. The Extracellular portion of the chain corresponds to 546–548; the sequence is DDY. Residues 549–569 traverse the membrane as a helical segment; it reads IFPPWANWVGWGIALSSMVLV. Residues 570–617 are Cytoplasmic-facing; that stretch reads PIYVIYKFLSTQGSLWERLAYGITPENEHHLVAQRDIRQFQLQHWLAI.

Belongs to the sodium:neurotransmitter symporter (SNF) (TC 2.A.22) family. SLC6A2 subfamily. As to quaternary structure, monomer. Can form homodimers in the cell membrane; homodimerization is mostly mediated by cholesterol and lipids, and regulates neurotransmitter transport activity. Interacts with PRKCABP. In terms of processing, palmitoylated; palmitoylation regulates protein levels and neurotransmitter transport.

The protein resides in the cell membrane. It is found in the cell projection. It localises to the axon. The protein localises to the synapse. Its subcellular location is the synaptosome. The enzyme catalyses (R)-noradrenaline(out) + chloride(out) + Na(+)(out) = (R)-noradrenaline(in) + chloride(in) + Na(+)(in). It carries out the reaction dopamine(out) + chloride(out) + Na(+)(out) = dopamine(in) + chloride(in) + Na(+)(in). The catalysed reaction is dopamine(out) + chloride(out) + 2 Na(+)(out) = dopamine(in) + chloride(in) + 2 Na(+)(in). Inhibited by mazindol, desipramine, nomifensine and nortriptyline. In terms of biological role, mediates sodium- and chloride-dependent transport of norepinephrine (also known as noradrenaline), the primary signaling neurotransmitter in the autonomic sympathetic nervous system. Is responsible for norepinephrine re-uptake and clearance from the synaptic cleft, thus playing a crucial role in norepinephrine inactivation and homeostasis. Can also mediate sodium- and chloride-dependent transport of dopamine. The polypeptide is Sodium-dependent noradrenaline transporter (Homo sapiens (Human)).